The sequence spans 249 residues: Hydantoin racemase (249 aa).

It belongs to the HyuE racemase family. Homohexamer.

It carries out the reaction a D-5-monosubstituted hydantoin = a L-5-monosubstituted hydantoin. The catalysed reaction is D-5-[2-(methylsulfanyl)ethyl]hydantoin = L-5-[2-(methysulfanyl)ethyl]hydantoin. It catalyses the reaction D-5-benzylhydantoin = L-5-benzylhydantoin. The enzyme catalyses D-5-isopropylhydantoin = L-5-isopropylhydantoin. It carries out the reaction D-5-isobutylhydantoin = L-5-isobutylhydantoin. Strongly inhibited by Cu(2+) and Zn(2+). Slightly stimulated by the addition of Mn(2+) or Co(2+), but also by metal-chelating agents such as EDTA or EGTA, indicating that the enzyme is not a metalloenzyme. Functionally, involved in the asymmetric conversion of racemic 5-substituted hydantoins to the corresponding L-amino acids. Catalyzes the racemization via enolization of D- and L-5-monosubstituted hydantoins. Is able to racemize 5-substituted hydantoins having aromatic or aliphatic substituents such as 5-(2-methylthioethyl)hydantoin, 5-isopropylhydantoin, 5-isobutylhydantoin and 5-benzylhydantoin. The protein is Hydantoin racemase of Pseudomonas sp. (strain NS671).